A 250-amino-acid polypeptide reads, in one-letter code: tRNA (guanine-N(1)-)-methyltransferase (250 aa).

S-adenosyl-L-methionine is bound by residues G113 and 133 to 138; that span reads IGDYVL.

It belongs to the RNA methyltransferase TrmD family. As to quaternary structure, homodimer.

It localises to the cytoplasm. It catalyses the reaction guanosine(37) in tRNA + S-adenosyl-L-methionine = N(1)-methylguanosine(37) in tRNA + S-adenosyl-L-homocysteine + H(+). Its function is as follows. Specifically methylates guanosine-37 in various tRNAs. The sequence is that of tRNA (guanine-N(1)-)-methyltransferase from Photorhabdus laumondii subsp. laumondii (strain DSM 15139 / CIP 105565 / TT01) (Photorhabdus luminescens subsp. laumondii).